Here is a 441-residue protein sequence, read N- to C-terminus: Pre-mRNA-splicing factor PRP46 (441 aa).

Disordered stretches follow at residues 1-22 and 81-107; these read MPVAKDLFPEYGTLATGENEPS and MGASSSALTKHTPSASQPTTHDSLTNL. A compositionally biased stretch (polar residues) spans 83 to 107; the sequence is ASSSALTKHTPSASQPTTHDSLTNL. WD repeat units lie at residues 130–169, 172–211, 214–253, 256–295, 298–336, 339–379, and 388–427; these read GHQGWVRSVCVEPENQWFATGSADKTIKIWDLATGKLRLT, GHIMGVRALGVSPRHPYMFSGGEDKMVKCWDLETNKVVRH, GHLSAVYSLDIHPTLDVLVSAGRDAVARVWDIRTRDPVVV, GHKSTINRVKFQASEPQVITASADETVRLWNLQAGKTMTT, HHKKSVRGLTLHPEEFTFSTASANSSKQWKCPEGDLVLN, DQNA…QSTQ, and ESENGIFDSSFDKTGLRLITCEADKSIKMWREKPNATAES.

The protein belongs to the WD repeat PRL1/PRL2 family. Associated with the spliceosome.

The protein localises to the cytoplasm. It is found in the nucleus. Its function is as follows. Involved in pre-mRNA splicing and required for cell cycle progression at G2/M. This Yarrowia lipolytica (strain CLIB 122 / E 150) (Yeast) protein is Pre-mRNA-splicing factor PRP46 (PRP46).